A 606-amino-acid chain; its full sequence is Granule-bound starch synthase 1, chloroplastic/amyloplastic (606 aa).

A chloroplast-targeting transit peptide spans 1–76 (MSALTTSQLA…GSRRFPSVVV (76 aa)). Positions 29–67 (RHGFQGLKPRSPAGGDASSLSVTTSARATPKQQRSVQRG) are disordered. Polar residues predominate over residues 46 to 66 (SSLSVTTSARATPKQQRSVQR). Position 97 (K97) interacts with ADP-alpha-D-glucose.

The protein belongs to the glycosyltransferase 1 family. Bacterial/plant glycogen synthase subfamily.

The protein localises to the plastid. The protein resides in the chloroplast. It localises to the amyloplast. The enzyme catalyses an NDP-alpha-D-glucose + [(1-&gt;4)-alpha-D-glucosyl](n) = [(1-&gt;4)-alpha-D-glucosyl](n+1) + a ribonucleoside 5'-diphosphate + H(+). Its pathway is glycan biosynthesis; starch biosynthesis. Functionally, required for the synthesis of amylose in endosperm. The protein is Granule-bound starch synthase 1, chloroplastic/amyloplastic (WAXY) of Oryza sativa (Rice).